We begin with the raw amino-acid sequence, 197 residues long: Putative methyltransferase Mtx subunit A (197 aa).

Belongs to the MtrA family. As to quaternary structure, may be part of a complex composed of 3 subunits; MtxA, MtxH and MtxX.

In Methanosarcina acetivorans (strain ATCC 35395 / DSM 2834 / JCM 12185 / C2A), this protein is Putative methyltransferase Mtx subunit A (mtxA).